We begin with the raw amino-acid sequence, 109 residues long: Con-Ins K2 (109 aa).

An N-terminal signal peptide occupies residues Met1–Gly24. A propeptide spanning residues Asn25 to Arg29 is cleaved from the precursor. Cystine bridges form between Cys41–Cys90, Cys53–Cys103, and Cys89–Cys94. Glu44 bears the 4-carboxyglutamate mark. The propeptide at Arg57–Arg83 is c peptide.

The protein belongs to the insulin family. As to quaternary structure, heterodimer of A and B chains; disulfide-linked. As to expression, expressed by the venom gland.

The protein resides in the secreted. Its function is as follows. This venom insulin, from a fish-hunting cone snail, facilitates prey capture by rapidly inducing hypoglycemic shock. It is one of the smallest known insulin found in nature and lacks the C-terminal segment of the B chain that, in human insulin, mediates engagement of the insulin receptor (INSR) and assembly of the hormone's hexameric storage form. Despite lacking this segment, it both binds and activates human insulin receptor (long isoform (HIR-B)) with a moderate potency (EC(50)=373.2 nM). In vivo, intraperitoneal injection of this peptide into zebrafish lowers blood glucose with a lower potency than human insulin. In addition, when applied to water, this peptide reduces overall locomotor activity of zebrafish larvae, observed as a significant decrease in the percentage of time spent swimming and movement frequency. When tested on a mouse model of diabetes, this insulin also lowers blood glucose with a 20-fold lower potency than human insulin. The polypeptide is Con-Ins K2 (Conus kinoshitai (Kinoshita's cone)).